The following is a 357-amino-acid chain: Alanine racemase, catabolic (357 aa).

Catalysis depends on Lys-33, which acts as the Proton acceptor; specific for D-alanine. Lys-33 carries the post-translational modification N6-(pyridoxal phosphate)lysine. The residue at position 122 (Lys-122) is an N6-carboxylysine. Arg-129 contacts substrate. The active-site Proton acceptor; specific for L-alanine is Tyr-253. Met-301 provides a ligand contact to substrate.

It belongs to the alanine racemase family. As to quaternary structure, homodimer. The cofactor is pyridoxal 5'-phosphate.

The enzyme catalyses L-alanine = D-alanine. Isomerizes L-alanine to D-alanine which is then oxidized to pyruvate by DadA. The protein is Alanine racemase, catabolic of Pseudomonas aeruginosa (strain ATCC 15692 / DSM 22644 / CIP 104116 / JCM 14847 / LMG 12228 / 1C / PRS 101 / PAO1).